Here is a 495-residue protein sequence, read N- to C-terminus: Averantin hydroxylase (495 aa).

The chain crosses the membrane as a helical span at residues 12 to 32 (ILLLIVLTVLTPPSLALYRLW). Asn-258 and Asn-289 each carry an N-linked (GlcNAc...) asparagine glycan. A heme-binding site is contributed by Cys-436.

Belongs to the cytochrome P450 family. Heme serves as cofactor.

It is found in the membrane. It catalyses the reaction (1'S)-averantin + reduced [NADPH--hemoprotein reductase] + O2 = (1'S,5'R)-5'-hydroxyaverantin + oxidized [NADPH--hemoprotein reductase] + H2O. It carries out the reaction (1'S)-averantin + reduced [NADPH--hemoprotein reductase] + O2 = (1'S,5'S)-5'-hydroxyaverantin + oxidized [NADPH--hemoprotein reductase] + H2O + H(+). Its pathway is mycotoxin biosynthesis; aflatoxin biosynthesis. Its function is as follows. Averantin hydroxylase; part of the gene cluster that mediates the biosynthesis of aflatoxins, a group of polyketide-derived furanocoumarins, and part of the most toxic and carcinogenic compounds among the known mycotoxins. The four major aflatoxins produced by A.parasiticus are aflatoxin B1 (AFB1), aflatoxin B2 (AFB2), aflatoxin G1 (AFG1) and aflatoxin G2 (AFG2). Within the aflatoxin pathway, the cytochrome P450 monooxygenase aflG catalyzes the hydroxylation of AVN to 5'hydroxyaverantin (HAVN). The biosynthesis of aflatoxins begins with the norsolorinic acid synthase aflC that combines a hexanoyl starter unit produced by the fatty acid synthase aflA/aflB and 7 malonyl-CoA extender units to synthesize the precursor NOR. The second step is the conversion of NOR to averantin and requires the norsolorinic acid ketoreductase aflD, which catalyzes the dehydration of norsolorinic acid to form (1'S)-averantin. The norsolorinic acid reductases aflE and aflF may also play a role in the conversion of NOR to AVN. The cytochrome P450 monooxygenase aflG then catalyzes the hydroxylation of AVN to 5'hydroxyaverantin (HAVN). The next step is performed by the 5'-hydroxyaverantin dehydrogenase aflH that transforms HAVN to 5'-oxoaverantin (OAVN) which is further converted to averufin (AVF) by aflK that plays a dual role in the pathway, as a 5'-oxoaverantin cyclase that mediates conversion of 5'-oxoaverantin, as well as a versicolorin B synthase in a later step in the pathway. The averufin oxidase aflI catalyzes the conversion of AVF to versiconal hemiacetal acetate (VHA). VHA is then the substrate for the versiconal hemiacetal acetate esterase aflJ to yield versiconal (VAL). Versicolorin B synthase aflK then converts VAL to versicolorin B (VERB) by closing the bisfuran ring of aflatoxin which is required for DNA-binding, thus giving to aflatoxin its activity as a mutagen. Then, the activity of the versicolorin B desaturase aflL leads to versicolorin A (VERA). A branch point starts from VERB since it can also be converted to dihydrodemethylsterigmatocystin (DMDHST), probably also by aflL, VERA being a precursor for aflatoxins B1 and G1, and DMDHST for aflatoxins B2 and G2. Next, the versicolorin reductase aflM and the cytochrome P450 monooxygenase aflN are involved in conversion of VERA to demethylsterigmatocystin (DMST). AflX and aflY seem also involved in this step, through probable aflX-mediated epoxide ring-opening step following versicolorin A oxidation and aflY-mediated Baeyer-Villiger oxidation required for the formation of the xanthone ring. The methyltransferase aflO then leads to the modification of DMST to sterigmatocystin (ST), and of DMDHST to dihydrosterigmatocystin (DHST). Both ST and DHST are then substrates of the O-methyltransferase aflP to yield O-methylsterigmatocystin (OMST) and dihydro-O-methylsterigmatocystin (DHOMST), respectively. Finally OMST is converted to aflatoxins B1 and G1, and DHOMST to aflatoxins B2 and G2, via the action of several enzymes including O-methylsterigmatocystin oxidoreductase aflQ, the cytochrome P450 monooxygenase aflU, but also the NADH-dependent flavin oxidoreductase nadA which is specifically required for the synthesis of AFG1. This chain is Averantin hydroxylase, found in Aspergillus parasiticus (strain ATCC 56775 / NRRL 5862 / SRRC 143 / SU-1).